The chain runs to 376 residues: MEVPRLDHALNSPTSPCEEVIKNLSLEAIQLCDRDGNKSQDSGIAEMEELPVPRNIKISNITCDSFKISWEMDSKSKDRITHYFIDLNKKENKNSNKFKHKDVPTKLVAKAVPLPMTVRGHWFLSPRTEYTVAVQTASKQVDGDYVVSEWSEIIEFCTADYSKVHLTQLLEKAEVIAGRMLKFSVFYRNQHKEYFDYIREHHGNAMQPSVKDNSGSHGSPISGKLEGIFFSCSTEFNTGKPPQDSPYGRYRFEIAAEKLFNPNTNLYFGDFYCMYTAYHYVILVIAPVGSPGDEFCKQRLPQLNSQDNKFLTCREEDGMLVYHHAQDVILEVIYTDPVGLSLGTVAEITGHQLMSLSTANAKKDPSCKTCNISVGR.

Phosphoserine occurs at positions 12 and 15. N-linked (GlcNAc...) asparagine glycosylation is present at Asn-23. Ser-25 carries the post-translational modification Phosphoserine. Asn-37 is a glycosylation site (N-linked (GlcNAc...) asparagine). The Fibronectin type-III domain maps to 52–161; sequence VPRNIKISNI…EIIEFCTADY (110 aa).

Belongs to the PHYHIP family.

May play a role in the development of the central system. The sequence is that of Phytanoyl-CoA hydroxylase interacting protein-like (PHYHIPL) from Bos taurus (Bovine).